A 339-amino-acid chain; its full sequence is Dihydroorotase (339 aa).

2 residues coordinate Zn(2+): His12 and His14. Substrate contacts are provided by residues 14–16 and Asn40; that span reads HVR. Positions 94, 133, 167, and 239 each coordinate Zn(2+). N6-carboxylysine is present on Lys94. His133 contributes to the substrate binding site. Asp239 is an active-site residue. Positions 243 and 255 each coordinate substrate.

It belongs to the metallo-dependent hydrolases superfamily. DHOase family. Class II DHOase subfamily. In terms of assembly, homodimer. The cofactor is Zn(2+).

The enzyme catalyses (S)-dihydroorotate + H2O = N-carbamoyl-L-aspartate + H(+). It functions in the pathway pyrimidine metabolism; UMP biosynthesis via de novo pathway; (S)-dihydroorotate from bicarbonate: step 3/3. Its function is as follows. Catalyzes the reversible cyclization of carbamoyl aspartate to dihydroorotate. In Helicobacter pylori (strain J99 / ATCC 700824) (Campylobacter pylori J99), this protein is Dihydroorotase.